Reading from the N-terminus, the 126-residue chain is Glycine cleavage system H protein (126 aa).

Residues 22-104 form the Lipoyl-binding domain; that stretch reads TVTIGITEYA…YEKAWMVKVE (83 aa). At K63 the chain carries N6-lipoyllysine.

It belongs to the GcvH family. In terms of assembly, the glycine cleavage system is composed of four proteins: P, T, L and H. Requires (R)-lipoate as cofactor.

The glycine cleavage system catalyzes the degradation of glycine. The H protein shuttles the methylamine group of glycine from the P protein to the T protein. Its function is as follows. Is also involved in protein lipoylation via its role as an octanoyl/lipoyl carrier protein intermediate. This Staphylococcus saprophyticus subsp. saprophyticus (strain ATCC 15305 / DSM 20229 / NCIMB 8711 / NCTC 7292 / S-41) protein is Glycine cleavage system H protein.